We begin with the raw amino-acid sequence, 280 residues long: UDP-3-O-acyl-N-acetylglucosamine deacetylase (280 aa).

3 residues coordinate Zn(2+): His-79, His-237, and Asp-241. Residue His-264 is the Proton donor of the active site.

The protein belongs to the LpxC family. Zn(2+) serves as cofactor.

The catalysed reaction is a UDP-3-O-[(3R)-3-hydroxyacyl]-N-acetyl-alpha-D-glucosamine + H2O = a UDP-3-O-[(3R)-3-hydroxyacyl]-alpha-D-glucosamine + acetate. It participates in glycolipid biosynthesis; lipid IV(A) biosynthesis; lipid IV(A) from (3R)-3-hydroxytetradecanoyl-[acyl-carrier-protein] and UDP-N-acetyl-alpha-D-glucosamine: step 2/6. Catalyzes the hydrolysis of UDP-3-O-myristoyl-N-acetylglucosamine to form UDP-3-O-myristoylglucosamine and acetate, the committed step in lipid A biosynthesis. The polypeptide is UDP-3-O-acyl-N-acetylglucosamine deacetylase (Chlamydia abortus (strain DSM 27085 / S26/3) (Chlamydophila abortus)).